We begin with the raw amino-acid sequence, 510 residues long: Glycerol kinase (510 aa).

Residue Thr12 participates in ADP binding. The ATP site is built by Thr12, Thr13, and Ser14. A sn-glycerol 3-phosphate-binding site is contributed by Thr12. An ADP-binding site is contributed by Arg16. The sn-glycerol 3-phosphate site is built by Arg82, Glu83, and Tyr134. Residues Arg82, Glu83, and Tyr134 each coordinate glycerol. His230 bears the Phosphohistidine; by HPr mark. Asp244 contributes to the sn-glycerol 3-phosphate binding site. Glycerol contacts are provided by Asp244 and Gln245. ADP contacts are provided by Thr266 and Gly309. Thr266, Gly309, Gln313, and Gly410 together coordinate ATP. Gly410 and Asn414 together coordinate ADP.

The protein belongs to the FGGY kinase family. As to quaternary structure, homotetramer and homodimer (in equilibrium). Post-translationally, the phosphoenolpyruvate-dependent sugar phosphotransferase system (PTS), including enzyme I, and histidine-containing protein (HPr) are required for the phosphorylation, which leads to the activation of the enzyme.

It carries out the reaction glycerol + ATP = sn-glycerol 3-phosphate + ADP + H(+). It participates in polyol metabolism; glycerol degradation via glycerol kinase pathway; sn-glycerol 3-phosphate from glycerol: step 1/1. With respect to regulation, activated by phosphorylation and inhibited by fructose 1,6-bisphosphate (FBP). Key enzyme in the regulation of glycerol uptake and metabolism. Catalyzes the phosphorylation of glycerol to yield sn-glycerol 3-phosphate. The protein is Glycerol kinase of Bacillus cereus (strain ATCC 10987 / NRS 248).